We begin with the raw amino-acid sequence, 207 residues long: Cytochrome c biogenesis ATP-binding export protein CcmA (207 aa).

Residues Leu4–Ala207 enclose the ABC transporter domain. Gly36–Thr43 contacts ATP.

It belongs to the ABC transporter superfamily. CcmA exporter (TC 3.A.1.107) family. The complex is composed of two ATP-binding proteins (CcmA) and two transmembrane proteins (CcmB).

It localises to the cell inner membrane. The enzyme catalyses heme b(in) + ATP + H2O = heme b(out) + ADP + phosphate + H(+). Part of the ABC transporter complex CcmAB involved in the biogenesis of c-type cytochromes; once thought to export heme, this seems not to be the case, but its exact role is uncertain. Responsible for energy coupling to the transport system. The sequence is that of Cytochrome c biogenesis ATP-binding export protein CcmA from Escherichia coli O6:H1 (strain CFT073 / ATCC 700928 / UPEC).